A 921-amino-acid polypeptide reads, in one-letter code: Isoleucine--tRNA ligase (921 aa).

Residues 57 to 67 (PYANGDIHMGH) carry the 'HIGH' region motif. Residue E552 participates in L-isoleucyl-5'-AMP binding. A 'KMSKS' region motif is present at residues 593-597 (KMSKS). An ATP-binding site is contributed by K596. Positions 888, 891, 908, and 911 each coordinate Zn(2+).

This sequence belongs to the class-I aminoacyl-tRNA synthetase family. IleS type 1 subfamily. In terms of assembly, monomer. Zn(2+) is required as a cofactor.

It localises to the cytoplasm. It carries out the reaction tRNA(Ile) + L-isoleucine + ATP = L-isoleucyl-tRNA(Ile) + AMP + diphosphate. Functionally, catalyzes the attachment of isoleucine to tRNA(Ile). As IleRS can inadvertently accommodate and process structurally similar amino acids such as valine, to avoid such errors it has two additional distinct tRNA(Ile)-dependent editing activities. One activity is designated as 'pretransfer' editing and involves the hydrolysis of activated Val-AMP. The other activity is designated 'posttransfer' editing and involves deacylation of mischarged Val-tRNA(Ile). The sequence is that of Isoleucine--tRNA ligase from Bacillus cereus (strain B4264).